Reading from the N-terminus, the 169-residue chain is Cell division inhibitor SulA (169 aa).

The tract at residues 1–22 (MHTSIYANRSTSFSPSAGNDTQ) is disordered. Positions 106–112 (ALRTGNY) are ftsZ binding. Residues 162 to 169 (KIHSNLYH) are lon protease binding.

It belongs to the SulA family. Interacts with FtsZ. Post-translationally, is rapidly cleaved and degraded by the Lon protease once DNA damage is repaired.

Its function is as follows. Component of the SOS system and an inhibitor of cell division. Accumulation of SulA causes rapid cessation of cell division and the appearance of long, non-septate filaments. In the presence of GTP, binds a polymerization-competent form of FtsZ in a 1:1 ratio, thus inhibiting FtsZ polymerization and therefore preventing it from participating in the assembly of the Z ring. This mechanism prevents the premature segregation of damaged DNA to daughter cells during cell division. This Enterobacter sp. (strain 638) protein is Cell division inhibitor SulA.